A 290-amino-acid chain; its full sequence is Transposon Ty3-I Gag polyprotein (290 aa).

N-acetylserine is present on S2. The segment at 265–282 adopts a CCHC-type zinc-finger fold; that stretch reads RLCFYCKKEGHRLNECRA.

The protein resides in the cytoplasm. In terms of biological role, capsid protein (CA) is the structural component of the virus-like particle (VLP), forming the shell that encapsulates the retrotransposons dimeric RNA genome. Functionally, nucleocapsid protein p9 (NC) forms the nucleocore that coats the retro-elements dimeric RNA. Binds these RNAs through its zinc fingers. Promotes primer tRNA(i)-Met annealing to the multipartite primer-binding site (PBS), dimerization of Ty3 RNA and initiation of reverse transcription. The sequence is that of Transposon Ty3-I Gag polyprotein (TY3A-I) from Saccharomyces cerevisiae (strain ATCC 204508 / S288c) (Baker's yeast).